Reading from the N-terminus, the 499-residue chain is Glycerol kinase (499 aa).

T13 is an ADP binding site. 3 residues coordinate ATP: T13, T14, and S15. T13 is a binding site for sn-glycerol 3-phosphate. An ADP-binding site is contributed by R17. 4 residues coordinate sn-glycerol 3-phosphate: R83, E84, Y135, and D244. Residues R83, E84, Y135, D244, and Q245 each contribute to the glycerol site. ADP contacts are provided by T266 and G310. The ATP site is built by T266, G310, Q314, and G411. Residues G411 and N415 each contribute to the ADP site.

This sequence belongs to the FGGY kinase family.

The catalysed reaction is glycerol + ATP = sn-glycerol 3-phosphate + ADP + H(+). It functions in the pathway polyol metabolism; glycerol degradation via glycerol kinase pathway; sn-glycerol 3-phosphate from glycerol: step 1/1. Its activity is regulated as follows. Inhibited by fructose 1,6-bisphosphate (FBP). In terms of biological role, key enzyme in the regulation of glycerol uptake and metabolism. Catalyzes the phosphorylation of glycerol to yield sn-glycerol 3-phosphate. The polypeptide is Glycerol kinase (Pseudothermotoga lettingae (strain ATCC BAA-301 / DSM 14385 / NBRC 107922 / TMO) (Thermotoga lettingae)).